The primary structure comprises 273 residues: 2,3,4,5-tetrahydropyridine-2,6-dicarboxylate N-succinyltransferase (273 aa).

Residues Arg104 and Asp141 each contribute to the substrate site.

It belongs to the transferase hexapeptide repeat family. Homotrimer.

Its subcellular location is the cytoplasm. The catalysed reaction is (S)-2,3,4,5-tetrahydrodipicolinate + succinyl-CoA + H2O = (S)-2-succinylamino-6-oxoheptanedioate + CoA. It functions in the pathway amino-acid biosynthesis; L-lysine biosynthesis via DAP pathway; LL-2,6-diaminopimelate from (S)-tetrahydrodipicolinate (succinylase route): step 1/3. This is 2,3,4,5-tetrahydropyridine-2,6-dicarboxylate N-succinyltransferase from Neisseria meningitidis serogroup C (strain 053442).